Here is a 205-residue protein sequence, read N- to C-terminus: Thymidylate kinase (205 aa).

11–18 serves as a coordination point for ATP; the sequence is GLDKSGKT.

Belongs to the thymidylate kinase family. As to quaternary structure, homodimer; the dimer arrangement is orthogonal and not antiparallel as in human enzyme.

It carries out the reaction dTMP + ATP = dTDP + ADP. It participates in pyrimidine metabolism; dTTP biosynthesis. Its function is as follows. Poxvirus TMP kinase is able to phosphorylate dTMP, dUMP and also dGMP from any purine and pyrimidine nucleoside triphosphate. The large substrate specificity is explained by the presence of a canal connecting the edge of the dimer interface to the TMP base binding pocket, canal not found in the human homolog. In Homo sapiens (Human), this protein is Thymidylate kinase (OPG178).